The following is a 571-amino-acid chain: Decapping 5-like protein (571 aa).

A compositionally biased stretch (low complexity) spans 1–17; sequence MASESSQSSSPSSSQPP. Disordered stretches follow at residues 1-27, 102-141, 159-187, and 258-305; these read MASE…SPGN, LQVN…ISGY, LSSK…GSLT, and SQVV…SEAQ. A Sm domain is found at 25–108; it reads PGNNVGDTFI…IKDLQVNPSP (84 aa). Polar residues-rich tracts occupy residues 104-138 and 167-187; these read VNPS…SSPI and TQHS…GSLT. The span at 264–279 shows a compositional bias: low complexity; the sequence is SPDVSSNQSYSSNPSP. Residues 293 to 305 are compositionally biased toward polar residues; the sequence is SVSSNLSPPSEAQ. Residues 419-455 enclose the DFDF domain; the sequence is RIPSSSIEYTEEFDFEAMNEKFKKSELWGYLGRNNQR. Residues 474-489 carry the FFD box motif; it reads PAYNKDDFFDTISCNQ. The TFG box signature appears at 498–518; sequence QQHNQFPEHMRQVPEAFGNNF.

It belongs to the LSM14 family. Homodimer. Component of the decapping complex.

It localises to the cytoplasm. The protein resides in the P-body. Functionally, as a component of the decapping complex, involved in the degradation of mRNAs. Promotes P-body formation. Translational repressor. The chain is Decapping 5-like protein (DCP5-L) from Arabidopsis thaliana (Mouse-ear cress).